Here is a 426-residue protein sequence, read N- to C-terminus: Aspartate aminotransferase, mitochondrial (426 aa).

The N-terminal 29 residues, 1–29, are a transit peptide targeting the mitochondrion; that stretch reads MIRSARLISNIKFGQKNIRQFSTNTNWWA. Residues glycine 60, tryptophan 156, and asparagine 209 each coordinate substrate. Residue lysine 273 is modified to N6-(pyridoxal phosphate)lysine. Arginine 401 provides a ligand contact to substrate.

This sequence belongs to the class-I pyridoxal-phosphate-dependent aminotransferase family. Homodimer. It depends on pyridoxal 5'-phosphate as a cofactor.

The protein resides in the mitochondrion matrix. It localises to the cell membrane. It catalyses the reaction L-aspartate + 2-oxoglutarate = oxaloacetate + L-glutamate. The enzyme catalyses L-kynurenine + 2-oxoglutarate = kynurenate + L-glutamate + H2O. Plays a key role in amino acid metabolism. Important for metabolite exchange between mitochondria and cytosol. This chain is Aspartate aminotransferase, mitochondrial (aatA), found in Dictyostelium discoideum (Social amoeba).